The primary structure comprises 458 residues: UDP-N-acetylmuramoylalanine--D-glutamate ligase (458 aa).

Residue 119–125 (GSNGKTT) participates in ATP binding.

This sequence belongs to the MurCDEF family.

Its subcellular location is the cytoplasm. The catalysed reaction is UDP-N-acetyl-alpha-D-muramoyl-L-alanine + D-glutamate + ATP = UDP-N-acetyl-alpha-D-muramoyl-L-alanyl-D-glutamate + ADP + phosphate + H(+). It functions in the pathway cell wall biogenesis; peptidoglycan biosynthesis. Cell wall formation. Catalyzes the addition of glutamate to the nucleotide precursor UDP-N-acetylmuramoyl-L-alanine (UMA). In Limosilactobacillus fermentum (strain NBRC 3956 / LMG 18251) (Lactobacillus fermentum), this protein is UDP-N-acetylmuramoylalanine--D-glutamate ligase.